The primary structure comprises 156 residues: Persephin (156 aa).

An N-terminal signal peptide occupies residues 1 to 21 (MAAGRLRILFLLLLSLHLGLG). 3 cysteine pairs are disulfide-bonded: C66–C124, C93–C152, and C97–C154.

The protein belongs to the TGF-beta family. GDNF subfamily. As to quaternary structure, homodimer; disulfide-linked. Interacts with GFRA4 coreceptor and RET: forms a 2:2:2 ternary complex composed of PSPN ligand, GFRA4 and RET receptor. As to expression, expressed at low levels in substantia nigra. Cochlea.

The protein localises to the secreted. Its function is as follows. Growth factor that exhibits neurotrophic activity on mesencephalic dopaminergic and motor neurons. Acts by binding to its coreceptor, GFRA4, leading to autophosphorylation and activation of the RET receptor. The chain is Persephin from Rattus norvegicus (Rat).